The sequence spans 339 residues: Centromere protein N (339 aa).

A phosphoserine mark is found at S226, S235, and S282.

Belongs to the CENP-N/CHL4 family. As to quaternary structure, component of the CENPA-NAC complex, at least composed of CENPA, CENPC, CENPH, CENPM, CENPN, CENPT and CENPU. The CENPA-NAC complex interacts with the CENPA-CAD complex, composed of CENPI, CENPK, CENPL, CENPO, CENPP, CENPQ, CENPR and CENPS. Interacts directly with CENPA. Identified in a centromere complex containing histones H2A, H2B and H4, and at least CENPA, CENPB, CENPC, CENPT, CENPN, HJURP, SUPT16H, SSRP1 and RSF1.

Its subcellular location is the nucleus. The protein resides in the chromosome. It is found in the centromere. The protein localises to the kinetochore. In terms of biological role, component of the CENPA-NAC (nucleosome-associated) complex, a complex that plays a central role in assembly of kinetochore proteins, mitotic progression and chromosome segregation. The CENPA-NAC complex recruits the CENPA-CAD (nucleosome distal) complex and may be involved in incorporation of newly synthesized CENPA into centromeres. CENPN is the first protein to bind specifically to CENPA nucleosomes and the direct binding of CENPA nucleosomes by CENPN is required for centromere assembly. Required for chromosome congression and efficiently align the chromosomes on a metaphase plate. This is Centromere protein N (CENPN) from Homo sapiens (Human).